Reading from the N-terminus, the 718-residue chain is Glycine--tRNA ligase beta subunit (718 aa).

It belongs to the class-II aminoacyl-tRNA synthetase family. In terms of assembly, tetramer of two alpha and two beta subunits.

The protein resides in the cytoplasm. The catalysed reaction is tRNA(Gly) + glycine + ATP = glycyl-tRNA(Gly) + AMP + diphosphate. This is Glycine--tRNA ligase beta subunit from Mesorhizobium japonicum (strain LMG 29417 / CECT 9101 / MAFF 303099) (Mesorhizobium loti (strain MAFF 303099)).